Reading from the N-terminus, the 169-residue chain is Actin-related protein 2/3 complex subunit 4 (169 aa).

This sequence belongs to the ARPC4 family. Component of the Arp2/3 complex composed of arpB/Arp2, arpC/Arp3, arcA/p41-arc, arcB/p34-arc, arcC/p21-arc, arcD/p20-arc and arcE/p16-arc. Interacts with carmil (via the region between the LRR domain and COOH-terminal proline-rich domain); carmil is required for Arp2/3-dependent actin nucleation. Arp2/3 complex, MyoB, MyoC, and the alpha and beta subunits of capping protein all form a larger complex with carmil.

It is found in the cytoplasm. The protein localises to the cytoskeleton. Its subcellular location is the cytosol. The protein resides in the cell cortex. It localises to the cell projection. It is found in the pseudopodium. In terms of biological role, functions as a component of the Arp2/3 complex which is involved in regulation of actin polymerization and together with an activating nucleation-promoting factor (NPF) mediates the formation of branched actin networks. Seems to contact the pointed end of the daughter actin filament. The Arp2/3 complex is involved in organizing the actin system in cell motility and chemotaxis, in phagocytosis and macropinocytosis, at late steps of endosome processing, and in mitosis. In concert with a group of other proteins, the Arp2/3 complex plays a general role in the rapid activation and adaptation of the actin system to its multiple functions. This Dictyostelium discoideum (Social amoeba) protein is Actin-related protein 2/3 complex subunit 4 (arcD).